The sequence spans 290 residues: MASKEEVAVETVEGGAAAAKAPYWDPPPAPLLDTSELGKWSLYRALIAEFMATLIFLYVSIATVIGYKNQRATVDACTGVGYLGVAWSFGATIFVLVYCTGGVSGGHINPAVTLGLFFGRKLSLVRTVLYVVAQCLGAIAGAGIVKGIMKRPYDALGGGANTVSDGYSAAGALGAEIVGTFILVYTVFSATDPKRTARDSFIPVLVPLPIGFAVFVVHLATIPITGTGINPARSLGAAVLYNQHAAWKDHWIFWVGPVIGAFLAAAYHKLVLRGEAAKALSSFRSTSVTA.

2 helical membrane-spanning segments follow: residues 45 to 65 (ALIA…ATVI) and 79 to 99 (GVGY…LVYC). Positions 109–111 (NPA) match the NPA 1 motif. 3 helical membrane-spanning segments follow: residues 128 to 148 (VLYV…VKGI), 168 to 188 (SAAG…YTVF), and 202 to 222 (IPVL…LATI). Positions 230-232 (NPA) match the NPA 2 motif. The helical transmembrane segment at 252–272 (IFWVGPVIGAFLAAAYHKLVL) threads the bilayer.

The protein belongs to the MIP/aquaporin (TC 1.A.8) family. PIP (TC 1.A.8.11) subfamily. Expressed in roots.

The protein resides in the cell membrane. Aquaporins facilitate the transport of water and small neutral solutes across cell membranes. The polypeptide is Probable aquaporin PIP2-7 (PIP2-7) (Oryza sativa subsp. japonica (Rice)).